Consider the following 298-residue polypeptide: Protease HtpX homolog (298 aa).

The next 2 helical transmembrane spans lie at 16-36 and 38-58; these read VMFG…YLFW and SWVS…LIMI. Zn(2+) is bound at residue histidine 144. Glutamate 145 is an active-site residue. Residue histidine 148 coordinates Zn(2+). The next 2 helical transmembrane spans lie at 159-179 and 197-217; these read IALA…NWFW and IIGL…ASIA. Glutamate 226 lines the Zn(2+) pocket.

Belongs to the peptidase M48B family. Zn(2+) is required as a cofactor.

Its subcellular location is the cell membrane. The sequence is that of Protease HtpX homolog from Levilactobacillus brevis (strain ATCC 367 / BCRC 12310 / CIP 105137 / JCM 1170 / LMG 11437 / NCIMB 947 / NCTC 947) (Lactobacillus brevis).